The following is an 857-amino-acid chain: Leucine-rich repeat extensin-like protein 5 (857 aa).

Residues 1–31 (MKTKMMMKNTSLIFVLLFITFFFTSISYSLS) form the signal peptide. One copy of the LRR 1 repeat lies at 32–53 (LTFNGDLSDNEVRLITQRQLLY). An N-linked (GlcNAc...) asparagine glycan is attached at asparagine 98. LRR repeat units lie at residues 125 to 149 (IRTVAGIDLNHADIAGYLPQELGLL), 150 to 172 (TDLALFHINSNRFCGTVPHRFNR), 174 to 197 (KLLFELDLSNNRFAGIFPTVVLQL), 198 to 221 (PSLKFLDLRFNEFEGPVPRELFSK), 223 to 244 (LDAIFINHNRFRFELPDNLGDS), 246 to 267 (VSVIVVANNHFHGCIPTSLGDM), 268 to 291 (RNLEEIIFMENGFNSCLPSQIGRL), 292 to 315 (KNVTVFDFSFNELVGSLPASIGGM), 316 to 339 (VSMEQLNVAHNRFSGKIPATICQL), and 341 to 362 (RLENFTFSYNFFTGEPPVCLGL). A glycan (N-linked (GlcNAc...) asparagine) is linked at asparagine 293. Asparagine 344 is a glycosylation site (N-linked (GlcNAc...) asparagine). Disordered regions lie at residues 406–776 (PPVV…EYSP) and 817–839 (YSPPPPPVIHHSQPPPPPIYEGP). Pro residues-rich tracts occupy residues 408 to 571 (VVVP…PTPI) and 579 to 768 (PIIP…PQSH). The tract at residues 615–857 (SPPPSTPTPV…YASPPPPPFY (243 aa)) is contains the Ser-Pro(4) repeats.

Hydroxylated on proline residues in the S-P-P-P-P repeat. Post-translationally, O-glycosylated on hydroxyprolines. As to expression, expressed in roots, leaves and flowers.

The protein localises to the secreted. Its subcellular location is the cell wall. Functionally, modulates cell morphogenesis by regulating cell wall formation and assembly, and/or growth polarization. In Arabidopsis thaliana (Mouse-ear cress), this protein is Leucine-rich repeat extensin-like protein 5 (LRX5).